Here is a 105-residue protein sequence, read N- to C-terminus: Nucleoid-associated protein RPC_4847 (105 aa).

Belongs to the YbaB/EbfC family. As to quaternary structure, homodimer.

Its subcellular location is the cytoplasm. It localises to the nucleoid. Binds to DNA and alters its conformation. May be involved in regulation of gene expression, nucleoid organization and DNA protection. This is Nucleoid-associated protein RPC_4847 from Rhodopseudomonas palustris (strain BisB18).